The sequence spans 255 residues: 4-diphosphocytidyl-2-C-methyl-D-erythritol kinase (255 aa).

Lysine 6 is an active-site residue. 95–105 (PVCAGLGGGSS) lines the ATP pocket. Aspartate 137 is an active-site residue.

The protein belongs to the GHMP kinase family. IspE subfamily.

The enzyme catalyses 4-CDP-2-C-methyl-D-erythritol + ATP = 4-CDP-2-C-methyl-D-erythritol 2-phosphate + ADP + H(+). The protein operates within isoprenoid biosynthesis; isopentenyl diphosphate biosynthesis via DXP pathway; isopentenyl diphosphate from 1-deoxy-D-xylulose 5-phosphate: step 3/6. Its function is as follows. Catalyzes the phosphorylation of the position 2 hydroxy group of 4-diphosphocytidyl-2C-methyl-D-erythritol. This is 4-diphosphocytidyl-2-C-methyl-D-erythritol kinase from Campylobacter jejuni subsp. doylei (strain ATCC BAA-1458 / RM4099 / 269.97).